The following is a 428-amino-acid chain: Sialidase-3 (428 aa).

Residues 24–27 (YRIP) carry the FRIP motif motif. Residues R25 and R45 each coordinate substrate. The active-site Proton acceptor is the D50. A BNR 1 repeat occupies 129–140 (ICSQDAGYSWSD). Positions 179 and 181 each coordinate substrate. Residues 203 to 214 (IYSDDLGATWHH) form a BNR 2 repeat. Substrate contacts are provided by E225 and R245. The BNR 3 repeat unit spans residues 254 to 265 (ALSIDHGECFQK). A Phosphoserine modification is found at S314. R341 contacts substrate. The Nucleophile role is filled by Y371. Residue E388 is part of the active site.

Belongs to the glycosyl hydrolase 33 family. In terms of assembly, interacts with CAV1; this interaction enhances NEU3 sialidase activity within caveola. Interacts with EGFR; this interaction mediates desialylation of EGFR and enhances downstream signaling. Post-translationally, palmitoylated; may regulate intracellular trafficking and anchorage to plasma membrane and endomembranes. Expressed in brain.

Its subcellular location is the cell membrane. It localises to the membrane. The protein localises to the caveola. The protein resides in the early endosome membrane. It is found in the recycling endosome membrane. Its subcellular location is the lysosome membrane. It carries out the reaction Hydrolysis of alpha-(2-&gt;3)-, alpha-(2-&gt;6)-, alpha-(2-&gt;8)- glycosidic linkages of terminal sialic acid residues in oligosaccharides, glycoproteins, glycolipids, colominic acid and synthetic substrates.. It catalyses the reaction a ganglioside GD1a + H2O = a ganglioside GM1 + N-acetylneuraminate. The catalysed reaction is a ganglioside GD1a (d18:1(4E)) + H2O = a ganglioside GM1 (d18:1(4E)) + N-acetylneuraminate. The enzyme catalyses a ganglioside GD1b + H2O = a ganglioside GM1 + N-acetylneuraminate. It carries out the reaction a ganglioside GD1b (d18:1(4E)) + H2O = a ganglioside GM1 (d18:1(4E)) + N-acetylneuraminate. It catalyses the reaction a ganglioside GD3 + H2O = a ganglioside GM3 + N-acetylneuraminate. The catalysed reaction is a ganglioside GD3 (d18:1(4E)) + H2O = a ganglioside GM3 (d18:1(4E)) + N-acetylneuraminate. The enzyme catalyses a ganglioside GM3 + H2O = a beta-D-galactosyl-(1-&gt;4)-beta-D-glucosyl-(1&lt;-&gt;1)-ceramide + N-acetylneuraminate. It carries out the reaction a ganglioside GM1 + H2O = a ganglioside GA1 + N-acetylneuraminate. It catalyses the reaction a ganglioside GM1 (d18:1(4E)) + H2O = a ganglioside GA1 (d18:1(4E)) + N-acetylneuraminate. The catalysed reaction is a ganglioside GM2 (d18:1(4E)) + H2O = a ganglioside GA2 (d18:1(4E)) + N-acetylneuraminate. The enzyme catalyses a ganglioside GM3 (d18:1(4E)) + H2O = a beta-D-Gal-(1-&gt;4)-beta-D-Glc-(1&lt;-&gt;1)-Cer(d18:1(4E)) + N-acetylneuraminate. It carries out the reaction a ganglioside GT1b + H2O = a ganglioside GD1b + N-acetylneuraminate. In terms of biological role, exo-alpha-sialidase that catalyzes the hydrolytic cleavage of the terminal sialic acid (N-acetylneuraminic acid, Neu5Ac) of a glycan moiety in the catabolism of glycolipids, glycoproteins and oligosacharides. Displays high catalytic efficiency for gangliosides including alpha-(2-&gt;3)-sialylated GD1a and GM3 and alpha-(2-&gt;8)-sialylated GD3. Plays a role in the regulation of transmembrane signaling through the modulation of ganglioside content of the lipid bilayer and by direct interaction with signaling receptors, such as EGFR. Desialylates EGFR and activates downstream signaling in proliferating cells. Contributes to clathrin-mediated endocytosis by regulating sorting of endocytosed receptors to early and recycling endosomes. This chain is Sialidase-3 (NEU3), found in Bos taurus (Bovine).